Reading from the N-terminus, the 447-residue chain is Beta-glucuronosyltransferase GlcAT14A (447 aa).

Topologically, residues 1 to 33 (MKKLRSYYSNVRHHQNHHHHHHHHSNIVSSERK) are cytoplasmic. A helical; Signal-anchor for type II membrane protein transmembrane segment spans residues 34–54 (WIFFPLLIGSIFALFLLFLTT). Over 55–447 (TLTSPTGGVR…TENFRSKQCK (393 aa)) the chain is Lumenal. 4 N-linked (GlcNAc...) asparagine glycosylation sites follow: Asn151, Asn200, Asn329, and Asn405.

This sequence belongs to the glycosyltransferase 14 family.

Its subcellular location is the golgi apparatus membrane. Its function is as follows. Beta-glucuronosyltransferase involved in the biosynthesis of type II arabinogalactan (AG). Modifies both the beta-1,6-linked galactan and beta-1,3-linked galactan present in type II AG. Transfers glucuronate to beta-1,6-galactooligosaccharides with degrees of polymerization ranging from 3 to 11. Transfers glucuronate to beta-1,3-galactooligosaccharides with degrees of polymerization ranging from 5 to 7. The addition of glucuronate at the O6 position may terminate galactose chain extension. Required for cell elongation during seedling growth. This chain is Beta-glucuronosyltransferase GlcAT14A, found in Arabidopsis thaliana (Mouse-ear cress).